Reading from the N-terminus, the 142-residue chain is Type II secretion system core protein G (142 aa).

A propeptide spans 1-8 (MRRQSQRG) (leader sequence). Phenylalanine 9 carries the post-translational modification N-methylphenylalanine. Residues 9-29 (FTLLEIMVVIVIMGILASLVV) traverse the membrane as a helical segment. The segment at 122-142 (SGQDGVPGTDDDIGNWTLSKK) is disordered.

It belongs to the GSP G family. In terms of assembly, type II secretion system is composed of four main components: the outer membrane complex, the inner membrane complex, the cytoplasmic secretion ATPase and the periplasm-spanning pseudopilus. Forms homomultimers. Post-translationally, cleaved by the prepilin peptidase. In terms of processing, methylated by prepilin peptidase at the amino group of the N-terminal phenylalanine once the leader sequence is cleaved.

The protein resides in the cell inner membrane. In terms of biological role, core component of the type II secretion system required for the energy-dependent secretion of extracellular factors such as proteases and toxins from the periplasm. Pseudopilin (pilin-like) protein that polymerizes to form the pseudopilus. Further polymerization triggers pseudopilus growth. This chain is Type II secretion system core protein G, found in Klebsiella michiganensis (strain ATCC 8724 / DSM 4798 / JCM 20051 / NBRC 3318 / NRRL B-199 / KCTC 1686 / BUCSAV 143 / CCM 1901).